The chain runs to 88 residues: MGKVAAKIKVMPESPEVDLDDLQERLEGVLPEGTKINGFEREDVAFGLVALTPTVIVPDDTGGTEAVEEAFANVDDVESVSIESTGRL.

The protein belongs to the EF-1-beta/EF-1-delta family.

Functionally, promotes the exchange of GDP for GTP in EF-1-alpha/GDP, thus allowing the regeneration of EF-1-alpha/GTP that could then be used to form the ternary complex EF-1-alpha/GTP/AAtRNA. This chain is Elongation factor 1-beta, found in Haloarcula marismortui (strain ATCC 43049 / DSM 3752 / JCM 8966 / VKM B-1809) (Halobacterium marismortui).